We begin with the raw amino-acid sequence, 192 residues long: Sarcoplasmic calcium-binding protein, alpha-B and -A chains (192 aa).

Ala1 bears the N-acetylalanine mark. EF-hand domains lie at 4-39 (WDNR…NTLI), 56-91 (IMRN…HCQG), 100-135 (AFKV…RSAF), and 136-171 (AEVK…YAQF). The Ca(2+) site is built by Asp17, Asp19, Asp21, Asp28, Asp69, Asn71, Asp73, Glu75, Glu80, Asp113, Asn115, Asp117, Lys119, and Glu124.

In terms of assembly, SCPs from crayfish, lobster, and shrimp are polymorphic dimers; three isotypes (alpha-alpha, alpha-beta, and beta-beta) have been identified.

Like parvalbumins, SCPs seem to be more abundant in fast contracting muscles, but no functional relationship can be established from this distribution. In Penaeus sp. (Penoeid shrimp), this protein is Sarcoplasmic calcium-binding protein, alpha-B and -A chains.